We begin with the raw amino-acid sequence, 62 residues long: Small ribosomal subunit protein eS31 (62 aa).

Residues Cys-29, Cys-32, Cys-48, and Cys-51 each contribute to the Zn(2+) site. The C4-type zinc-finger motif lies at 29–51 (CPRCGSFMAFHKWPVPRWHCGKC).

The protein belongs to the eukaryotic ribosomal protein eS31 family. Part of the 30S ribosomal subunit. It depends on Zn(2+) as a cofactor.

In Hyperthermus butylicus (strain DSM 5456 / JCM 9403 / PLM1-5), this protein is Small ribosomal subunit protein eS31.